The primary structure comprises 375 residues: Acetylornithine aminotransferase (375 aa).

Pyridoxal 5'-phosphate-binding positions include 93 to 94 (GT) and F120. Position 123 (R123) interacts with N(2)-acetyl-L-ornithine. 205–208 (DEVQ) contacts pyridoxal 5'-phosphate. Position 234 is an N6-(pyridoxal phosphate)lysine (K234). T262 contacts N(2)-acetyl-L-ornithine. Residue T263 coordinates pyridoxal 5'-phosphate.

The protein belongs to the class-III pyridoxal-phosphate-dependent aminotransferase family. ArgD subfamily. Homodimer. Pyridoxal 5'-phosphate is required as a cofactor.

Its subcellular location is the cytoplasm. It catalyses the reaction N(2)-acetyl-L-ornithine + 2-oxoglutarate = N-acetyl-L-glutamate 5-semialdehyde + L-glutamate. It functions in the pathway amino-acid biosynthesis; L-arginine biosynthesis; N(2)-acetyl-L-ornithine from L-glutamate: step 4/4. The chain is Acetylornithine aminotransferase from Staphylococcus epidermidis (strain ATCC 12228 / FDA PCI 1200).